The sequence spans 473 residues: MGRTLYDKIFDEHVVHTEEDGTAVLYIDRHLVHEVTSPQAFEGLREAGRKVWRVSSIVATADHNTPTTGWERGYDGIADPISKEQIVTLDKNIQESGAAAFFPFLSKRQGIVHVIGPENGATLPGMTVVCGDSHTSTHGAFGALAHGIGTSEVEHVMATQTLLAKKAKNMLVQVNGKVAPGITAKDIVLAIIGKIGTAGGTGYTIEFAGEAIRDLSMEGRMTVCNMAIEAGARAGLVAVDDKTINYVKGRPLAPTGVEWDQAVAYWKTLHSDADAKFDAVVELNAAEIVPQVTWGTSPEMVLGIDAVVPDPDKEKDPSKRGAIERALTYMGLQPGKPMDDIFVDKVFIGSCTNSRIEDMREAAAVVKKLGQKVAKNIKLAMVVPGSGLVKEQAEREGLDAIFKAAGFEWREPGCSMCLAMNADRLEPGERCASTSNRNFEGRQGAGGRTHLVSPAMAAAAAIHGHFVDIRQFA.

[4Fe-4S] cluster is bound by residues cysteine 351, cysteine 414, and cysteine 417.

The protein belongs to the aconitase/IPM isomerase family. LeuC type 1 subfamily. In terms of assembly, heterodimer of LeuC and LeuD. The cofactor is [4Fe-4S] cluster.

It carries out the reaction (2R,3S)-3-isopropylmalate = (2S)-2-isopropylmalate. It participates in amino-acid biosynthesis; L-leucine biosynthesis; L-leucine from 3-methyl-2-oxobutanoate: step 2/4. In terms of biological role, catalyzes the isomerization between 2-isopropylmalate and 3-isopropylmalate, via the formation of 2-isopropylmaleate. The chain is 3-isopropylmalate dehydratase large subunit from Acidovorax ebreus (strain TPSY) (Diaphorobacter sp. (strain TPSY)).